The following is a 399-amino-acid chain: Argininosuccinate synthase (399 aa).

ATP-binding positions include 10 to 18 (AYSGGVDTS) and Ala38. Tyr89 contacts L-citrulline. ATP is bound at residue Gly119. Thr121, Asn125, and Asp126 together coordinate L-aspartate. Asn125 contributes to the L-citrulline binding site. L-citrulline-binding residues include Arg129, Ser177, Ser186, Glu262, and Tyr274.

It belongs to the argininosuccinate synthase family. Type 1 subfamily. As to quaternary structure, homotetramer.

The protein localises to the cytoplasm. It carries out the reaction L-citrulline + L-aspartate + ATP = 2-(N(omega)-L-arginino)succinate + AMP + diphosphate + H(+). The protein operates within amino-acid biosynthesis; L-arginine biosynthesis; L-arginine from L-ornithine and carbamoyl phosphate: step 2/3. This Acaryochloris marina (strain MBIC 11017) protein is Argininosuccinate synthase.